A 397-amino-acid polypeptide reads, in one-letter code: Putative gustatory receptor 93c (397 aa).

The Cytoplasmic portion of the chain corresponds to 1–12 (MIERLKKVSLPA). A helical membrane pass occupies residues 13–33 (LSAFILFCSCHYGRILGVICF). The Extracellular portion of the chain corresponds to 34-87 (DIGQRTSDDSLVVRNRHQFKWFCLSCRLISVTAVCCFCAPYVADIEDPYERLLQ). A helical membrane pass occupies residues 88-108 (CFRLSASLICGICIIVVQVCY). Over 109–141 (EKELLRMIISFLRLFRRVRRLSSLKRIGFGGKR) the chain is Cytoplasmic. A helical transmembrane segment spans residues 142 to 162 (EFFLLLFKFICLVYELYSEIC). The Extracellular portion of the chain corresponds to 163–179 (QLWHLPDSLSLFATLCE). The chain crosses the membrane as a helical span at residues 180 to 200 (IFLEIGSLMIIHIGFVGYLSV). The Cytoplasmic portion of the chain corresponds to 201 to 266 (AALYSEVNSF…RTFHRLLELP (66 aa)). A helical membrane pass occupies residues 267–287 (VLIILLGKIFATTILSYEVII). Residues 288 to 295 (RPELYARK) lie on the Extracellular side of the membrane. The chain crosses the membrane as a helical span at residues 296–316 (IGMWGLVVKSFADVILLTLAV). Over 317–371 (HEAVSSSRMMRRLSLENFPITDHKAWHMKWEMFLSRLNFFEFRVRPLGLFEVSNE) the chain is Cytoplasmic. Residues 372–392 (VILLFLSSMITYFTYVVQYGI) form a helical membrane-spanning segment. The Extracellular portion of the chain corresponds to 393 to 397 (QTNRL).

Belongs to the insect chemoreceptor superfamily. Gustatory receptor (GR) family. Gr93a subfamily. In larvae, is expressed in neurons of the posterior pharyngeal sense organ.

The protein resides in the cell membrane. Functionally, probable gustatory receptor which mediates acceptance or avoidance behavior, depending on its substrates. In Drosophila melanogaster (Fruit fly), this protein is Putative gustatory receptor 93c (Gr93c).